Here is a 152-residue protein sequence, read N- to C-terminus: UPF0266 membrane protein YobD (152 aa).

Helical transmembrane passes span 6–26 (LLLI…QFIM), 45–65 (VDSV…VTSH), and 67–87 (AQMT…IFWI).

This sequence belongs to the UPF0266 family.

It localises to the cell inner membrane. The protein is UPF0266 membrane protein YobD of Salmonella paratyphi C (strain RKS4594).